Consider the following 349-residue polypeptide: Bifunctional protein FolKE (349 aa).

Residues 1-226 (MQTTYLSMGS…LFEIDSSKTD (226 aa)) are 2-amino-4-hydroxy-6-hydroxymethyldihydropteridine pyrophosphokinase. Residues 226 to 349 (DSIVLIKDIP…KRMEFLESLL (124 aa)) form a GTP cyclohydrolase 1 region.

This sequence in the N-terminal section; belongs to the HPPK family. The protein in the C-terminal section; belongs to the GTP cyclohydrolase I family. As to quaternary structure, homomer.

It carries out the reaction 6-hydroxymethyl-7,8-dihydropterin + ATP = (7,8-dihydropterin-6-yl)methyl diphosphate + AMP + H(+). The catalysed reaction is GTP + H2O = 7,8-dihydroneopterin 3'-triphosphate + formate + H(+). Its pathway is cofactor biosynthesis; 7,8-dihydroneopterin triphosphate biosynthesis; 7,8-dihydroneopterin triphosphate from GTP: step 1/1. The protein operates within cofactor biosynthesis; tetrahydrofolate biosynthesis; 2-amino-4-hydroxy-6-hydroxymethyl-7,8-dihydropteridine diphosphate from 7,8-dihydroneopterin triphosphate: step 4/4. This Lactococcus lactis subsp. lactis (strain IL1403) (Streptococcus lactis) protein is Bifunctional protein FolKE (folKE).